A 240-amino-acid polypeptide reads, in one-letter code: Sugar fermentation stimulation protein homolog (240 aa).

This sequence belongs to the SfsA family.

This Crocosphaera subtropica (strain ATCC 51142 / BH68) (Cyanothece sp. (strain ATCC 51142)) protein is Sugar fermentation stimulation protein homolog.